Reading from the N-terminus, the 346-residue chain is Phosphoribosylformylglycinamidine cyclo-ligase (346 aa).

The protein belongs to the AIR synthase family.

It is found in the cytoplasm. It carries out the reaction 2-formamido-N(1)-(5-O-phospho-beta-D-ribosyl)acetamidine + ATP = 5-amino-1-(5-phospho-beta-D-ribosyl)imidazole + ADP + phosphate + H(+). It functions in the pathway purine metabolism; IMP biosynthesis via de novo pathway; 5-amino-1-(5-phospho-D-ribosyl)imidazole from N(2)-formyl-N(1)-(5-phospho-D-ribosyl)glycinamide: step 2/2. The sequence is that of Phosphoribosylformylglycinamidine cyclo-ligase from Bacillus velezensis (strain DSM 23117 / BGSC 10A6 / LMG 26770 / FZB42) (Bacillus amyloliquefaciens subsp. plantarum).